A 253-amino-acid polypeptide reads, in one-letter code: 5-oxoprolinase subunit A (253 aa).

The protein belongs to the LamB/PxpA family. In terms of assembly, forms a complex composed of PxpA, PxpB and PxpC.

It catalyses the reaction 5-oxo-L-proline + ATP + 2 H2O = L-glutamate + ADP + phosphate + H(+). Functionally, catalyzes the cleavage of 5-oxoproline to form L-glutamate coupled to the hydrolysis of ATP to ADP and inorganic phosphate. In Bacillus cereus (strain B4264), this protein is 5-oxoprolinase subunit A.